We begin with the raw amino-acid sequence, 206 residues long: MLPPAIHLSLIPLLCILMKNCLAFKNDATEILYSHVVKPVSAHPSSNSTLNQARNGGRHFSSTGLDRNSRVQVGCRELRSTKYISDGQCTSISPLKELVCAGECLPLPVLPNWIGGGYGTKYWSRRSSQEWRCVNDKTRTQRIQLQCQDGSTRTYKITVVTACKCKRYTRQHNESSHNFESVSPAKPAQHHRERKRASKSSKHSLS.

The N-terminal stretch at 1-23 (MLPPAIHLSLIPLLCILMKNCLA) is a signal peptide. The segment at 42–62 (AHPSSNSTLNQARNGGRHFSS) is disordered. Polar residues predominate over residues 43–62 (HPSSNSTLNQARNGGRHFSS). N-linked (GlcNAc...) asparagine glycosylation occurs at asparagine 47. 4 disulfide bridges follow: cysteine 75–cysteine 133, cysteine 89–cysteine 147, cysteine 100–cysteine 163, and cysteine 104–cysteine 165. One can recognise a CTCK domain in the interval 75–170 (CRELRSTKYI…TACKCKRYTR (96 aa)). The N-linked (GlcNAc...) asparagine glycan is linked to asparagine 173. Residues 176 to 206 (SHNFESVSPAKPAQHHRERKRASKSSKHSLS) form a disordered region. Residues 188-206 (AQHHRERKRASKSSKHSLS) show a composition bias toward basic residues.

This sequence belongs to the sclerostin family. Interacts with BMP2, BMP4, BMP6 and BMP7 with high affinity. In terms of tissue distribution, highly expressed within the maximally sensitized/receptive endometrium. Weakly expressed in brain, kidney and the female reproductive tract. Expressed in the dermal papilla (DP) and at high level in the precortex of both anagen vibrissae and pelage follicles. Dynymic expression during the hair cycle.

The protein resides in the secreted. Directly antagonizes activity of BMP2, BMP4, BMP6 and BMP7 in a dose-dependent manner. May be involved in the onset of endometrial receptivity for implantation/sensitization for the decidual cell reaction. Enhances Wnt signaling and inhibits TGF-beta signaling. The protein is Sclerostin domain-containing protein 1 (Sostdc1) of Rattus norvegicus (Rat).